We begin with the raw amino-acid sequence, 114 residues long: Large ribosomal subunit protein bL19 (114 aa).

Belongs to the bacterial ribosomal protein bL19 family.

In terms of biological role, this protein is located at the 30S-50S ribosomal subunit interface and may play a role in the structure and function of the aminoacyl-tRNA binding site. This chain is Large ribosomal subunit protein bL19, found in Lactococcus lactis subsp. lactis (strain IL1403) (Streptococcus lactis).